Reading from the N-terminus, the 172-residue chain is Small ribosomal subunit protein uS5 (172 aa).

Residues 16 to 79 (LKEKLVHINR…EDGKKNVIKV (64 aa)) enclose the S5 DRBM domain.

This sequence belongs to the universal ribosomal protein uS5 family. Part of the 30S ribosomal subunit. Contacts proteins S4 and S8.

Functionally, with S4 and S12 plays an important role in translational accuracy. Its function is as follows. Located at the back of the 30S subunit body where it stabilizes the conformation of the head with respect to the body. This Chlorobium phaeobacteroides (strain DSM 266 / SMG 266 / 2430) protein is Small ribosomal subunit protein uS5.